Consider the following 645-residue polypeptide: Lipase 1 (645 aa).

The signal sequence occupies residues 1–24; that stretch reads MKRSFIFAPGMLALSISAISNAHA. S34 functions as the Nucleophile in the catalytic mechanism. Residues D327 and H330 contribute to the active site. Residues 383 to 645 enclose the Autotransporter domain; the sequence is NEQGKLGVFG…SFSLGVNASF (263 aa).

Belongs to the 'GDSL' lipolytic enzyme family.

The protein resides in the secreted. The catalysed reaction is a triacylglycerol + H2O = a diacylglycerol + a fatty acid + H(+). The polypeptide is Lipase 1 (lip-1) (Photorhabdus luminescens (Xenorhabdus luminescens)).